The following is a 581-amino-acid chain: Proline--tRNA ligase (581 aa).

The protein belongs to the class-II aminoacyl-tRNA synthetase family. ProS type 1 subfamily. Homodimer.

It localises to the cytoplasm. It catalyses the reaction tRNA(Pro) + L-proline + ATP = L-prolyl-tRNA(Pro) + AMP + diphosphate. Catalyzes the attachment of proline to tRNA(Pro) in a two-step reaction: proline is first activated by ATP to form Pro-AMP and then transferred to the acceptor end of tRNA(Pro). As ProRS can inadvertently accommodate and process non-cognate amino acids such as alanine and cysteine, to avoid such errors it has two additional distinct editing activities against alanine. One activity is designated as 'pretransfer' editing and involves the tRNA(Pro)-independent hydrolysis of activated Ala-AMP. The other activity is designated 'posttransfer' editing and involves deacylation of mischarged Ala-tRNA(Pro). The misacylated Cys-tRNA(Pro) is not edited by ProRS. The chain is Proline--tRNA ligase from Delftia acidovorans (strain DSM 14801 / SPH-1).